The primary structure comprises 926 residues: Serine/threonine-protein kinase/endoribonuclease IRE2 (926 aa).

Positions 1-34 (MASAVRGSRPWPRLGLQLQFAALLLGTLSPQVHT) are cleaved as a signal peptide. Over 35–430 (LRPENLLLVS…TPDSYLGLGP (396 aa)) the chain is Lumenal. A helical transmembrane segment spans residues 431-451 (QDLLAASLTAVLLGGWILFVM). Over 452-926 (RQQQPQVVEK…RRPCPGATGR (475 aa)) the chain is Cytoplasmic. Residues 478–501 (DAQSLHSGASRRSQKRLQSPSKQA) are compositionally biased toward polar residues. A disordered region spans residues 478–509 (DAQSLHSGASRRSQKRLQSPSKQAQPLDDPEA). Residues 520–781 (FNPKDVLGRG…APQVLAHPFF (262 aa)) form the Protein kinase domain. ATP is bound by residues 526-534 (LGRGAGGTF) and Lys548. Asp637 functions as the Proton acceptor in the catalytic mechanism. A KEN domain is found at 784–912 (RAKQLQFFQD…ESLFLPYYPP (129 aa)).

Belongs to the protein kinase superfamily. Ser/Thr protein kinase family. Mg(2+) serves as cofactor. In terms of processing, autophosphorylated.

Its subcellular location is the endoplasmic reticulum membrane. It catalyses the reaction L-seryl-[protein] + ATP = O-phospho-L-seryl-[protein] + ADP + H(+). The catalysed reaction is L-threonyl-[protein] + ATP = O-phospho-L-threonyl-[protein] + ADP + H(+). The kinase domain is activated by trans-autophosphorylation. Kinase activity is required for activation of the endoribonuclease domain. Induces translational repression through 28S ribosomal RNA cleavage in response to ER stress. Pro-apoptotic. Appears to play no role in the unfolded-protein response, unlike closely related proteins. The polypeptide is Serine/threonine-protein kinase/endoribonuclease IRE2 (Homo sapiens (Human)).